The following is a 290-amino-acid chain: Ventral anterior homeobox 2 (290 aa).

Over residues 1-17 (MGDGGAERDRGPARRAE) the composition is skewed to basic and acidic residues. The tract at residues 1-75 (MGDGGAERDR…GQPGPGEADH (75 aa)) is disordered. A DNA-binding region (homeobox) is located at residues 102-161 (PKRTRTSFTAEQLYRLEMEFQRCQYVVGRERTELARQLNLSETQVKVWFQNRRTKQKKDQ). A disordered region spans residues 205-240 (PSLPGLPASHRGTSLGDPRNSSPRLNPLSSASASPP). Over residues 222 to 238 (PRNSSPRLNPLSSASAS) the composition is skewed to low complexity.

It belongs to the EMX homeobox family.

Its subcellular location is the nucleus. Its function is as follows. Transcription factor that may function in dorsoventral specification of the forebrain. Regulates the expression of Wnt signaling antagonists including the expression of a truncated TCF7L2 isoform that cannot bind CTNNB1 and acts therefore as a potent dominant-negative Wnt antagonist. Plays a crucial role in eye development and, in particular, in the specification of the ventral optic vesicle. May be a regulator of axial polarization in the retina. The protein is Ventral anterior homeobox 2 (VAX2) of Homo sapiens (Human).